Consider the following 444-residue polypeptide: Exodeoxyribonuclease 7 large subunit (444 aa).

Belongs to the XseA family. Heterooligomer composed of large and small subunits.

It localises to the cytoplasm. It catalyses the reaction Exonucleolytic cleavage in either 5'- to 3'- or 3'- to 5'-direction to yield nucleoside 5'-phosphates.. Its function is as follows. Bidirectionally degrades single-stranded DNA into large acid-insoluble oligonucleotides, which are then degraded further into small acid-soluble oligonucleotides. The sequence is that of Exodeoxyribonuclease 7 large subunit from Hahella chejuensis (strain KCTC 2396).